We begin with the raw amino-acid sequence, 888 residues long: Leucine--tRNA ligase (888 aa).

The 'HIGH' region signature appears at 43–53 (PYPSGRIHMGH). The 'KMSKS' region signature appears at 644 to 648 (KMSKS). Lysine 647 provides a ligand contact to ATP.

The protein belongs to the class-I aminoacyl-tRNA synthetase family.

The protein resides in the cytoplasm. It catalyses the reaction tRNA(Leu) + L-leucine + ATP = L-leucyl-tRNA(Leu) + AMP + diphosphate. In Rhodopseudomonas palustris (strain BisA53), this protein is Leucine--tRNA ligase.